The following is a 374-amino-acid chain: Histidinol-phosphate aminotransferase 2 (374 aa).

Residue Lys227 is modified to N6-(pyridoxal phosphate)lysine.

This sequence belongs to the class-II pyridoxal-phosphate-dependent aminotransferase family. Histidinol-phosphate aminotransferase subfamily. As to quaternary structure, homodimer. The cofactor is pyridoxal 5'-phosphate.

It catalyses the reaction L-histidinol phosphate + 2-oxoglutarate = 3-(imidazol-4-yl)-2-oxopropyl phosphate + L-glutamate. The protein operates within amino-acid biosynthesis; L-histidine biosynthesis; L-histidine from 5-phospho-alpha-D-ribose 1-diphosphate: step 7/9. The polypeptide is Histidinol-phosphate aminotransferase 2 (hisC2) (Ralstonia nicotianae (strain ATCC BAA-1114 / GMI1000) (Ralstonia solanacearum)).